A 1508-amino-acid chain; its full sequence is ABC-type transporter oblD (1508 aa).

Disordered stretches follow at residues 1–35 (MSLG…LTNN) and 54–82 (KYTQ…PNGG). Residues 11–24 (TPNSVMPSDASLHN) show a composition bias toward polar residues. Residues N24 and N35 are each glycosylated (N-linked (GlcNAc...) asparagine). Over residues 55–68 (YTQNSVYSTTSQNP) the composition is skewed to polar residues. N83, N231, and N314 each carry an N-linked (GlcNAc...) asparagine glycan. Residues 136–390 (LEAVGLVRKL…FLNMGFVCPD (255 aa)) enclose the ABC transporter 1 domain. The next 5 membrane-spanning stretches (helical) occupy residues 501–521 (ITIS…SMFF), 536–556 (LLFF…LTLY), 610–630 (GNFF…SMFF), 643–663 (ALPF…FTIP), and 752–772 (GIIF…SDFI). The ABC transporter 2 domain maps to 828-1070 (FQWKDICYDI…ILIDYFTRNG (243 aa)). Residue 864-871 (GVSGAGKT) participates in ATP binding. Helical transmembrane passes span 1172–1192 (YIYS…FSLY), 1206–1226 (FAIF…MPHF), 1296–1316 (LFVW…IAAL), and 1322–1342 (AGNM…ILTT). N-linked (GlcNAc...) asparagine glycosylation occurs at N1390. Residues 1443-1463 (FGLMWVFVVFNAFAACGLYYW) form a helical membrane-spanning segment.

The protein belongs to the ABC transporter superfamily. ABCG family. PDR (TC 3.A.1.205) subfamily.

The protein resides in the cell membrane. ABC-type transporter; part of the gene cluster that mediates the biosynthesis of the sesterterpenes ophiobolins, fungal phytotoxins with potential anti-cancer activities. Acts as a specific transporter involved in ophiobolins secretion. The sequence is that of ABC-type transporter oblD from Cochliobolus heterostrophus (strain C5 / ATCC 48332 / race O) (Southern corn leaf blight fungus).